Reading from the N-terminus, the 258-residue chain is Cobalt-precorrin-4 C(11)-methyltransferase (258 aa).

Belongs to the precorrin methyltransferase family. As to quaternary structure, homodimer.

It carries out the reaction Co-precorrin-4 + S-adenosyl-L-methionine = Co-precorrin-5A + S-adenosyl-L-homocysteine + H(+). It participates in cofactor biosynthesis; adenosylcobalamin biosynthesis; cob(II)yrinate a,c-diamide from sirohydrochlorin (anaerobic route): step 4/10. Catalyzes the methylation of C-11 in cobalt-precorrin-4 to form cobalt-precorrin-5A. The chain is Cobalt-precorrin-4 C(11)-methyltransferase (cbiF) from Priestia megaterium (Bacillus megaterium).